A 333-amino-acid chain; its full sequence is Acetyltransferase Pat (333 aa).

3',5'-cyclic AMP contacts are provided by residues Gly-85 to Ala-88, Arg-95 to Thr-96, and Arg-135. The N-acetyltransferase domain occupies Phe-153–Ile-317. Residue Glu-211 coordinates Mg(2+). Residues Phe-237–Val-239, Gly-245–Ser-250, Asn-276, and Arg-285 contribute to the substrate site.

As to quaternary structure, homodimer. The cofactor is Mg(2+).

With respect to regulation, allosterically regulated by cAMP. Functionally, catalyzes specifically the acetylation of the epsilon-amino group of a highly conserved lysine residue in acetyl-CoA synthetase (ACS) and of the universal stress protein (USP) MSMEG_4207. Acetylation results in the inactivation of ACS activity and could be important for mycobacteria to adjust to environmental changes. The polypeptide is Acetyltransferase Pat (Mycolicibacterium smegmatis (strain ATCC 700084 / mc(2)155) (Mycobacterium smegmatis)).